We begin with the raw amino-acid sequence, 630 residues long: Arginine--tRNA ligase (630 aa).

Residues 120–130 (ANPVHPLHIGH) carry the 'HIGH' region motif.

Belongs to the class-I aminoacyl-tRNA synthetase family.

The protein localises to the cytoplasm. The catalysed reaction is tRNA(Arg) + L-arginine + ATP = L-arginyl-tRNA(Arg) + AMP + diphosphate. The polypeptide is Arginine--tRNA ligase (Pyrobaculum aerophilum (strain ATCC 51768 / DSM 7523 / JCM 9630 / CIP 104966 / NBRC 100827 / IM2)).